The following is a 466-amino-acid chain: MAKTLYEKLFDAHVVYEAENETPLLYIDRHLVHEVTSPQAFDGLRAHGRPVRQPGKTFATMDHNVSTQTKDINACGEMARIQMQELIKNCKEFGVELYDLNHPYQGIVHVMGPEQGVTLPGMTIVCGDSHTATHGAFGALAFGIGTSEVEHVLATQTLKQGRAKTMKIEVQGKAAPGITAKDIVLAIIGKTGSAGGTGHVVEFCGEAIRDLSMEGRMTLCNMAIEMGAKAGLVAPDETTFNYVKGRLHAPKGKDFDDAIAYWKTLQTDEGATFDTVVTLQAEEISPQVTWGTNPGQVISVNDNIPDPASFADPVERASAEKALAYMGLKPGIPLTEVAIDKVFIGSCTNSRIEDLRAAAEIAKGRKVAPGVQALVVPGSGPVKAQAEAEGLDKIFIEAGFEWRLPGCSMCLAMNNDRLNPGERCASTSNRNFEGRQGRGGRTHLVSPAMAAAAAVTGHFADIRNIK.

Positions 347, 407, and 410 each coordinate [4Fe-4S] cluster.

The protein belongs to the aconitase/IPM isomerase family. LeuC type 1 subfamily. In terms of assembly, heterodimer of LeuC and LeuD. Requires [4Fe-4S] cluster as cofactor.

It catalyses the reaction (2R,3S)-3-isopropylmalate = (2S)-2-isopropylmalate. Its pathway is amino-acid biosynthesis; L-leucine biosynthesis; L-leucine from 3-methyl-2-oxobutanoate: step 2/4. In terms of biological role, catalyzes the isomerization between 2-isopropylmalate and 3-isopropylmalate, via the formation of 2-isopropylmaleate. This Escherichia coli O9:H4 (strain HS) protein is 3-isopropylmalate dehydratase large subunit.